The chain runs to 189 residues: GMP synthase [glutamine-hydrolyzing] subunit A (189 aa).

The Glutamine amidotransferase type-1 domain maps to 5-189 (KIIVINNYGQ…MNFFKVCEDY (185 aa)). The active-site Nucleophile is the cysteine 79. Residues histidine 166 and glutamate 168 contribute to the active site.

As to quaternary structure, heterodimer composed of a glutamine amidotransferase subunit (A) and a GMP-binding subunit (B).

It carries out the reaction XMP + L-glutamine + ATP + H2O = GMP + L-glutamate + AMP + diphosphate + 2 H(+). It functions in the pathway purine metabolism; GMP biosynthesis; GMP from XMP (L-Gln route): step 1/1. Functionally, catalyzes the synthesis of GMP from XMP. This Methanococcoides burtonii (strain DSM 6242 / NBRC 107633 / OCM 468 / ACE-M) protein is GMP synthase [glutamine-hydrolyzing] subunit A.